The chain runs to 313 residues: tRNA dimethylallyltransferase (313 aa).

10–17 (GPTAVGKT) serves as a coordination point for ATP. 12–17 (TAVGKT) serves as a coordination point for substrate. The interval 35–38 (DSMQ) is interaction with substrate tRNA.

Belongs to the IPP transferase family. As to quaternary structure, monomer. Mg(2+) is required as a cofactor.

The catalysed reaction is adenosine(37) in tRNA + dimethylallyl diphosphate = N(6)-dimethylallyladenosine(37) in tRNA + diphosphate. Functionally, catalyzes the transfer of a dimethylallyl group onto the adenine at position 37 in tRNAs that read codons beginning with uridine, leading to the formation of N6-(dimethylallyl)adenosine (i(6)A). The sequence is that of tRNA dimethylallyltransferase from Alkaliphilus oremlandii (strain OhILAs) (Clostridium oremlandii (strain OhILAs)).